Reading from the N-terminus, the 680-residue chain is MIDRYKHQQLRIGLVSPQQISAWATKKIPNGEIVGEVTKPYTFHYKTNKPEKDGLFCERIFGPIKSGICACGNYRVIGDEKEDSKFCEQCGVEFIDSRIRRYQMGYIKLTCPVTHVWYLKRLPSYIANLLDKPLKELEGLVYCDFSFARPITKKPTFLRLRGSFEYEIQSWKYSLPLFFTTQGFDIFRNREISTGAGAIREQLADLDLRIIIENSLVEWKQLGEEGPTGNEWEDRKIVRRKDFLVRRMELAKHFIRTNIEPEWMILCLLPVLPPELRPIIQIEGGKLMSSDINELYRRVIYRNNTLTDLLTTSRSTPGELVMCQEKLVQEAVDTLLDNGIRGQPMRDGHNKVYKSFSDVIEGKEGRFRETLLGKRVDYSGRSVIVVGPSLSLHRCGLPREIAIELFQTFVIRGLIRQHLASNIGVAKSQIREKKPVVWEILQEVMQGHPVLLNRAPTLHRLGIQSFQPILVEGRTICLHPLVCKGFNADFDGDQMAVHVPLSLEAQAEARLLMFSHMNLLSPAIGDPISVPTQDMLIGLYVLTSGTRRGICANRYNPCNRKNSQNERIYETNYKYMKEPFFCNSYDAIGAYRQKRINLDSPLWLRWQLDQRVIASREVPIEVHYESFGNYHEIYAHYLIVRSVKKETFFIYIRTTVGHISFYREIEEAIQGFSQACSYDT.

The Zn(2+) site is built by Cys69, Cys71, Cys87, and Cys90. Residues Asp489, Asp491, and Asp493 each coordinate Mg(2+).

Belongs to the RNA polymerase beta' chain family. RpoC1 subfamily. In plastids the minimal PEP RNA polymerase catalytic core is composed of four subunits: alpha, beta, beta', and beta''. When a (nuclear-encoded) sigma factor is associated with the core the holoenzyme is formed, which can initiate transcription. Requires Mg(2+) as cofactor. Zn(2+) is required as a cofactor.

The protein resides in the plastid. The protein localises to the chloroplast. It catalyses the reaction RNA(n) + a ribonucleoside 5'-triphosphate = RNA(n+1) + diphosphate. DNA-dependent RNA polymerase catalyzes the transcription of DNA into RNA using the four ribonucleoside triphosphates as substrates. The sequence is that of DNA-directed RNA polymerase subunit beta' from Arabis hirsuta (Hairy rock-cress).